Consider the following 185-residue polypeptide: Peptide deformylase (185 aa).

2 residues coordinate Fe cation: cysteine 109 and histidine 152. Residue glutamate 153 is part of the active site. Histidine 156 contacts Fe cation.

The protein belongs to the polypeptide deformylase family. Fe(2+) is required as a cofactor.

It catalyses the reaction N-terminal N-formyl-L-methionyl-[peptide] + H2O = N-terminal L-methionyl-[peptide] + formate. Removes the formyl group from the N-terminal Met of newly synthesized proteins. Requires at least a dipeptide for an efficient rate of reaction. N-terminal L-methionine is a prerequisite for activity but the enzyme has broad specificity at other positions. This is Peptide deformylase from Roseiflexus castenholzii (strain DSM 13941 / HLO8).